The following is a 250-amino-acid chain: Probable phosphatase VIBHAR_04983 (250 aa).

Residues histidine 8, histidine 10, histidine 16, histidine 41, glutamate 74, histidine 102, histidine 132, aspartate 194, and histidine 196 each coordinate Zn(2+).

Belongs to the PHP family. Requires Zn(2+) as cofactor.

The chain is Probable phosphatase VIBHAR_04983 from Vibrio campbellii (strain ATCC BAA-1116).